The sequence spans 452 residues: Phosphoglucosamine mutase (452 aa).

S112 functions as the Phosphoserine intermediate in the catalytic mechanism. Mg(2+)-binding residues include S112, D251, D253, and D255. Phosphoserine is present on S112.

The protein belongs to the phosphohexose mutase family. Mg(2+) serves as cofactor. Activated by phosphorylation.

The catalysed reaction is alpha-D-glucosamine 1-phosphate = D-glucosamine 6-phosphate. Its function is as follows. Catalyzes the conversion of glucosamine-6-phosphate to glucosamine-1-phosphate. The polypeptide is Phosphoglucosamine mutase (Bordetella pertussis (strain Tohama I / ATCC BAA-589 / NCTC 13251)).